The following is a 186-amino-acid chain: Holliday junction branch migration complex subunit RuvA (186 aa).

Residues 1–63 (MNDYINGLLH…DNVFKYYGFK (63 aa)) form a domain I region. Residues 64 to 137 (NQLIRDLFEL…QKELFNNKIS (74 aa)) are domain II. A region of interest (flexible linker) is located at residue S137. The domain III stretch occupies residues 137–186 (SDKKNKVITSLEKLGYKTKDIYKIIINIDEDMNIEDLTKYVLEQLSYLHN).

It belongs to the RuvA family. In terms of assembly, homotetramer. Forms an RuvA(8)-RuvB(12)-Holliday junction (HJ) complex. HJ DNA is sandwiched between 2 RuvA tetramers; dsDNA enters through RuvA and exits via RuvB. An RuvB hexamer assembles on each DNA strand where it exits the tetramer. Each RuvB hexamer is contacted by two RuvA subunits (via domain III) on 2 adjacent RuvB subunits; this complex drives branch migration. In the full resolvosome a probable DNA-RuvA(4)-RuvB(12)-RuvC(2) complex forms which resolves the HJ.

It is found in the cytoplasm. In terms of biological role, the RuvA-RuvB-RuvC complex processes Holliday junction (HJ) DNA during genetic recombination and DNA repair, while the RuvA-RuvB complex plays an important role in the rescue of blocked DNA replication forks via replication fork reversal (RFR). RuvA specifically binds to HJ cruciform DNA, conferring on it an open structure. The RuvB hexamer acts as an ATP-dependent pump, pulling dsDNA into and through the RuvAB complex. HJ branch migration allows RuvC to scan DNA until it finds its consensus sequence, where it cleaves and resolves the cruciform DNA. The sequence is that of Holliday junction branch migration complex subunit RuvA from Mycoplasma mycoides subsp. mycoides SC (strain CCUG 32753 / NCTC 10114 / PG1).